A 97-amino-acid chain; its full sequence is MRLSYILVVVIAVTLQACVCATPVIKEANQAMLANGPLPSIVNTEGGRLLRGVKKRTAEREVQEERMSGAKLSEKGKQFLKWFFRGSDTRVKGRSWR.

Residues 1–21 (MRLSYILVVVIAVTLQACVCA) form the signal peptide. A RxLR-dEER motif is present at residues 48–66 (RLLRGVKKRTAEREVQEER).

The protein belongs to the RxLR effector family.

Its subcellular location is the secreted. It is found in the host cell membrane. Functionally, effector that is involved in host plant infection. Contributes to virulence during the early infection stage, by inhibiting plant defense responses induced by both PAMP-triggered immunity (PTI) and effector-triggered immunity (ETI). This is RxLR effector protein PexRD21 from Phytophthora infestans (strain T30-4) (Potato late blight agent).